We begin with the raw amino-acid sequence, 229 residues long: Ribonuclease 3 (229 aa).

The RNase III domain maps to 5–127 (LARLERKLGY…LIGAIYLDAD (123 aa)). Residue Glu-40 participates in Mg(2+) binding. Residue Asp-44 is part of the active site. The Mg(2+) site is built by Asp-113 and Glu-116. The active site involves Glu-116. The DRBM domain maps to 154–224 (DPKTRLQEFL…AAAALIALGV (71 aa)).

The protein belongs to the ribonuclease III family. As to quaternary structure, homodimer. The cofactor is Mg(2+).

Its subcellular location is the cytoplasm. It catalyses the reaction Endonucleolytic cleavage to 5'-phosphomonoester.. Digests double-stranded RNA. Involved in the processing of primary rRNA transcript to yield the immediate precursors to the large and small rRNAs (23S and 16S). Processes some mRNAs, and tRNAs when they are encoded in the rRNA operon. Processes pre-crRNA and tracrRNA of type II CRISPR loci if present in the organism. In Pseudomonas putida (strain W619), this protein is Ribonuclease 3.